The primary structure comprises 105 residues: Probable molt-inhibiting hormone (105 aa).

The N-terminal stretch at 1–28 (MYRMPMRFWLTAVVMVVVGALLLDTASA) is a signal peptide. Cystine bridges form between Cys35-Cys72, Cys52-Cys68, and Cys55-Cys81.

Belongs to the arthropod CHH/MIH/GIH/VIH hormone family. As to expression, expressed in the postmolt, intermolt, and premolt stages of the shrimp eyestalks and the brain.

It is found in the secreted. Inhibits Y-organs where molting hormone (ecdysteroid) is secreted. A molting cycle is initiated when MIH secretion diminishes or stops. This Metapenaeus ensis (Greasyback shrimp) protein is Probable molt-inhibiting hormone.